The following is a 229-amino-acid chain: Large ribosomal subunit protein uL1 (229 aa).

The protein belongs to the universal ribosomal protein uL1 family. As to quaternary structure, part of the 50S ribosomal subunit.

Binds directly to 23S rRNA. The L1 stalk is quite mobile in the ribosome, and is involved in E site tRNA release. Functionally, protein L1 is also a translational repressor protein, it controls the translation of the L11 operon by binding to its mRNA. In Clostridium tetani (strain Massachusetts / E88), this protein is Large ribosomal subunit protein uL1.